Here is a 512-residue protein sequence, read N- to C-terminus: MSKKPVMLMILDGFGISPNKEGNAVAAANKPNYDRLFAKYPHTELQASGLEVGLPEGQMGNSEVGHLNIGAGRIIYQELTRITKEIKEGTFFTNKALVKAMDEAKENNTSLHLMGLLSNGGVHSHIDHLKGLLELAKKKGLQKVYVHAFMDGRDVAPSSGKEFIVELENAMKEIGVGEIATISGRYYAMDRDNRWERVELAYNAMVLGEGEKASSAVEAIEKSYHDNKTDEFVLPTVIEEDGHPVARIKDGDSVIFFNFRPDRAREITRAIVDPEFKGFERKQLHVNFVCMTQYDKTLECVDVAYRPESYTNTLGEYVASKGLNQLRIAETEKYAHVTFFFNGGVEQPNTNEDRALIASPKVATYDLKPEMSAYEVTDELINRLDQDKYDMIILNFANPDMVGHTGVQEAAVKAIEAVDECLGKVADKVLEKEGTLFITADHGNAEVMIDYSTGKPMTAHTSDPVPFLWVSKDAEGKSLKDGGKLADIAPTMLTVMGLEVPSEMTGTCLLNK.

Asp12 and Ser62 together coordinate Mn(2+). The Phosphoserine intermediate role is filled by Ser62. Substrate-binding positions include His123, 153-154 (RD), Arg185, Arg191, 260-263 (RPDR), and Lys333. Mn(2+) is bound by residues Asp400, His404, Asp441, His442, and His460.

The protein belongs to the BPG-independent phosphoglycerate mutase family. As to quaternary structure, monomer. The cofactor is Mn(2+).

It catalyses the reaction (2R)-2-phosphoglycerate = (2R)-3-phosphoglycerate. It participates in carbohydrate degradation; glycolysis; pyruvate from D-glyceraldehyde 3-phosphate: step 3/5. Its function is as follows. Catalyzes the interconversion of 2-phosphoglycerate and 3-phosphoglycerate. The polypeptide is 2,3-bisphosphoglycerate-independent phosphoglycerate mutase (Clostridium perfringens (strain ATCC 13124 / DSM 756 / JCM 1290 / NCIMB 6125 / NCTC 8237 / Type A)).